We begin with the raw amino-acid sequence, 105 residues long: Mini zinc finger protein 1 (105 aa).

Residues Met-1–Asn-29 form a disordered region. The segment at Tyr-35–Glu-84 adopts a ZF-HD dimerization-type; degenerate zinc-finger fold.

Homo- and heterodimers.

The protein resides in the cytoplasm. In terms of biological role, inhibits zinc finger homeodomain (ZHD) transcription factors, by interacting with them to prevent both their nuclear localization and their DNA-binding properties. The polypeptide is Mini zinc finger protein 1 (MIF1) (Oryza sativa subsp. indica (Rice)).